Here is a 114-residue protein sequence, read N- to C-terminus: Putative toxin HigB3 (114 aa).

This sequence belongs to the mycobacterial HigB family.

Its function is as follows. Putative toxic component of a type II toxin-antitoxin (TA) system. Its cognate antitoxin would be HigA3. Not toxic upon expression in M.smegmatis. The protein is Putative toxin HigB3 of Mycobacterium tuberculosis (strain ATCC 25618 / H37Rv).